The sequence spans 215 residues: uncharacterized protein (215 aa).

The disordered stretch occupies residues 25–48; that stretch reads LKSASPGPAPASQQASSFGSAPAQ. The span at 27–47 shows a compositional bias: low complexity; that stretch reads SASPGPAPASQQASSFGSAPA.

This is an uncharacterized protein from Homo sapiens (Human).